The chain runs to 727 residues: Glucans biosynthesis glucosyltransferase H (727 aa).

Positions 18–38 (SAMPNERPGAMEPQNLSKMPE) are disordered. Helical transmembrane passes span 58-78 (FLVV…MGAV), 97-117 (VNFC…LILL), 278-298 (LQQF…GWWV), 408-428 (IMAY…LMLA), 460-480 (LFYI…LLLL), 496-516 (IFSV…MMFI), and 572-592 (LLAW…ISAW).

The protein belongs to the glycosyltransferase 2 family. OpgH subfamily.

The protein localises to the cell inner membrane. Its pathway is glycan metabolism; osmoregulated periplasmic glucan (OPG) biosynthesis. Functionally, involved in the biosynthesis of osmoregulated periplasmic glucans (OPGs). In Shewanella baltica (strain OS185), this protein is Glucans biosynthesis glucosyltransferase H.